The following is a 60-amino-acid chain: Mastoparan-VB2 (60 aa).

The signal sequence occupies residues 1 to 27 (MKNTILLLFTAFIFLMGFFGMSADALA). AXPX repeat units follow at residues 27-30 (ADPK), 31-34 (ADPL), 35-38 (AGPF), and 41-44 (ADPD). Positions 28 to 45 (DPKADPLAGPFPDADPDP) are excised as a propeptide. Residue L59 is modified to Leucine amide.

This sequence belongs to the MCD family. Mastoparan subfamily. In terms of tissue distribution, expressed by the venom gland.

The protein localises to the secreted. Its subcellular location is the target cell membrane. Antimicrobial peptide. Shows activity against both Gram-positive and -negative bacteria, as well against fungi. Also promotes moderate mast cell degranulation. Does not show hemolytic activity on rabbit and human erythrocytes. Its mast cell degranulation activity may be related to the activation of G-protein coupled receptors in mast cells as well as interaction with other proteins located in cell endosomal membranes in the mast cells. This is Mastoparan-VB2 from Vespa bicolor (Black shield wasp).